A 782-amino-acid polypeptide reads, in one-letter code: E3 ubiquitin-protein ligase SopA (782 aa).

Positions 137 to 171 (VSVSANNRPTVSEGRTPPVSPSLSLQATSSPSSPA) are disordered. The span at 157 to 171 (PSLSLQATSSPSSPA) shows a compositional bias: low complexity. C753 functions as the Glycyl thioester intermediate in the catalytic mechanism.

The protein belongs to the SopA E3 ligase family. Ubiquitinated in the presence of host E1 ubiquitin-activating enzyme, E2 ubiquitin-conjugating enzyme and ubiquitin.

It is found in the secreted. Its subcellular location is the host cell. The catalysed reaction is S-ubiquitinyl-[E2 ubiquitin-conjugating enzyme]-L-cysteine + [acceptor protein]-L-lysine = [E2 ubiquitin-conjugating enzyme]-L-cysteine + N(6)-ubiquitinyl-[acceptor protein]-L-lysine.. Its function is as follows. Effector proteins function to alter host cell physiology and promote bacterial survival in host tissues. This protein is an E3 ubiquitin ligase that interferes with host's ubiquitination pathway. The polypeptide is E3 ubiquitin-protein ligase SopA (sopA) (Salmonella enteritidis PT4 (strain P125109)).